The following is a 409-amino-acid chain: MKAEILCVGTELLLGDIVNTNAQYISKELANIGIEVYHHSVIGDNENRLLKELERAFNYCDLVITTGGLGPTKDDLTKESVAKFFQEDLVLHEKSLKQIEKRLLCFNKSMTESNKKQAYFPKNCEILENPNGTAPGFIIEKDNKIAIILPGPPYEMQPMFENKVIPYLEKLTNCTIKSKVLRITGIGESDVADLISDILESQTNPTVAPYAKQGETTLRITAKANSEEKALNLIVPIEKEIRQILGDNIYSSGETSLEEVIASILVKRNLTIATAESCTGGLLAGKLINFPGISSVFLEGAITYSNESKINRLNVKKETLEKYTAVSKEVALEMAEGIAKSSGTNIGISTTGVAGPGGGTYDKPIGLVYIGLYINGKTFVKELNYSGNRQFIRNITVTRALDFLRRNLE.

It belongs to the CinA family.

The chain is Putative competence-damage inducible protein from Clostridium botulinum (strain Okra / Type B1).